A 233-amino-acid chain; its full sequence is 2-C-methyl-D-erythritol 4-phosphate cytidylyltransferase (233 aa).

It belongs to the IspD/TarI cytidylyltransferase family. IspD subfamily.

It carries out the reaction 2-C-methyl-D-erythritol 4-phosphate + CTP + H(+) = 4-CDP-2-C-methyl-D-erythritol + diphosphate. Its pathway is isoprenoid biosynthesis; isopentenyl diphosphate biosynthesis via DXP pathway; isopentenyl diphosphate from 1-deoxy-D-xylulose 5-phosphate: step 2/6. Catalyzes the formation of 4-diphosphocytidyl-2-C-methyl-D-erythritol from CTP and 2-C-methyl-D-erythritol 4-phosphate (MEP). This is 2-C-methyl-D-erythritol 4-phosphate cytidylyltransferase from Carboxydothermus hydrogenoformans (strain ATCC BAA-161 / DSM 6008 / Z-2901).